The following is a 234-amino-acid chain: 2,3-bisphosphoglycerate-dependent phosphoglycerate mutase 1 (234 aa).

Substrate-binding positions include 14 to 21 (RHGQSIWN), 27 to 28 (TG), Arg66, and 93 to 96 (ERHY). Residue His15 is the Tele-phosphohistidine intermediate of the active site. Glu93 acts as the Proton donor/acceptor in catalysis.

It belongs to the phosphoglycerate mutase family. BPG-dependent PGAM subfamily. Homodimer.

It carries out the reaction (2R)-2-phosphoglycerate = (2R)-3-phosphoglycerate. It functions in the pathway carbohydrate degradation; glycolysis; pyruvate from D-glyceraldehyde 3-phosphate: step 3/5. Catalyzes the interconversion of 2-phosphoglycerate and 3-phosphoglycerate. This chain is 2,3-bisphosphoglycerate-dependent phosphoglycerate mutase 1, found in Nitrosomonas europaea (strain ATCC 19718 / CIP 103999 / KCTC 2705 / NBRC 14298).